The primary structure comprises 78 residues: 4-methyl-3-hydroxyanthranilic acid carrier protein (78 aa).

Residue S33 is modified to O-(pantetheine 4'-phosphoryl)serine.

This sequence belongs to the acyl carrier protein (ACP) family. In terms of processing, 4'-phosphopantetheine is transferred from CoA to a specific serine of the apo-form of this carrier protein.

It participates in antibiotic biosynthesis. Functionally, involved in the biosynthesis of actinomycin. Acts as a carrier in the transfer and thioesterification of 4-methyl-3-hydroxyanthranilic acid (4-MHA). The chain is 4-methyl-3-hydroxyanthranilic acid carrier protein from Streptomyces anulatus (Streptomyces chrysomallus).